The chain runs to 687 residues: Putative pentatricopeptide repeat-containing protein At3g15930 (687 aa).

13 PPR repeats span residues 98 to 132 (DVVVWNNMIKGWSKVDCDGEGVRLYLNMLKEGVTP), 133 to 168 (DSHTFPFLLNGLKRDGGALACGKKLHCHVVKFGLGS), 169 to 199 (NLYVQNALVKMYSLCGLMDMARGVFDRRCKE), 200 to 234 (DVFSWNLMISGYNRMKEYEESIELLVEMERNLVSP), 235 to 269 (TSVTLLLVLSACSKVKDKDLCKRVHEYVSECKTEP), 270 to 304 (SLRLENALVNAYAACGEMDIAVRIFRSMKARDVIS), 305 to 331 (WTSIVKGYVERGNLKLARTYFDQMPVR), 332 to 366 (DRISWTIMIDGYLRAGCFNESLEIFREMQSAGMIP), 367 to 401 (DEFTMVSVLTACAHLGSLEIGEWIKTYIDKNKIKN), 402 to 432 (DVVVGNALIDMYFKCGCSEKAQKVFHDMDQR), 433 to 467 (DKFTWTAMVVGLANNGQGQEAIKVFFQMQDMSIQP), 468 to 498 (DDITYLGVLSACNHSGMVDQARKFFAKMRSD), and 504 to 534 (SLVHYGCMVDMLGRAGLVKEAYEILRKMPMN). Positions 539–614 (VWGALLGASR…TPGFSLIEVN (76 aa)) are type E motif. Residues 615 to 645 (GFAHEFVAGDKSHLQSEEIYMKLEELAQEST) form a type E(+) motif region.

It belongs to the PPR family. PCMP-E subfamily.

This chain is Putative pentatricopeptide repeat-containing protein At3g15930 (PCMP-E51), found in Arabidopsis thaliana (Mouse-ear cress).